A 183-amino-acid polypeptide reads, in one-letter code: Adenine phosphoribosyltransferase (183 aa).

Belongs to the purine/pyrimidine phosphoribosyltransferase family. In terms of assembly, homodimer.

The protein resides in the cytoplasm. It catalyses the reaction AMP + diphosphate = 5-phospho-alpha-D-ribose 1-diphosphate + adenine. The protein operates within purine metabolism; AMP biosynthesis via salvage pathway; AMP from adenine: step 1/1. Functionally, catalyzes a salvage reaction resulting in the formation of AMP, that is energically less costly than de novo synthesis. The polypeptide is Adenine phosphoribosyltransferase (Corynebacterium kroppenstedtii (strain DSM 44385 / JCM 11950 / CIP 105744 / CCUG 35717)).